The sequence spans 568 residues: Clathrin coat assembly protein AP180B (568 aa).

The 127-residue stretch at 1 to 127 folds into the ENTH domain; the sequence is MSSLYTKLVK…EEYGRLGMDH (127 aa). Over residues 262 to 283 the composition is skewed to basic and acidic residues; the sequence is HLREETKRQRGEPSEPQQDRKP. The disordered stretch occupies residues 262–302; it reads HLREETKRQRGEPSEPQQDRKPSTAISSTSSHNNNSNDKNK. K282 participates in a covalent cross-link: Glycyl lysine isopeptide (Lys-Gly) (interchain with G-Cter in ubiquitin). Low complexity predominate over residues 284-298; that stretch reads STAISSTSSHNNNSN. Phosphothreonine is present on T449.

This sequence belongs to the AP180 family. As to quaternary structure, interacts with PAN1 and the clathrin heavy and light chains CHC1 and CLC1.

The protein resides in the bud. It is found in the bud neck. Its subcellular location is the cell membrane. The protein localises to the cytoplasm. Functionally, involved in endocytosis and clathrin cage assembly. The protein is Clathrin coat assembly protein AP180B (YAP1802) of Saccharomyces cerevisiae (strain ATCC 204508 / S288c) (Baker's yeast).